The following is a 189-amino-acid chain: Large ribosomal subunit protein uL6 (189 aa).

It belongs to the universal ribosomal protein uL6 family. Part of the 50S ribosomal subunit.

Functionally, this protein binds to the 23S rRNA, and is important in its secondary structure. It is located near the subunit interface in the base of the L7/L12 stalk, and near the tRNA binding site of the peptidyltransferase center. The chain is Large ribosomal subunit protein uL6 from Bacteroides thetaiotaomicron (strain ATCC 29148 / DSM 2079 / JCM 5827 / CCUG 10774 / NCTC 10582 / VPI-5482 / E50).